We begin with the raw amino-acid sequence, 209 residues long: PRA1 family protein A1 (209 aa).

A run of 4 helical transmembrane segments spans residues 51–73 (LYYY…VLTR), 77–99 (IFAA…GSFS), 144–164 (VFVL…SGLL), and 166–186 (VSVA…LRTP).

This sequence belongs to the PRA1 family.

It localises to the endoplasmic reticulum membrane. Functionally, may be involved in both secretory and endocytic intracellular trafficking in the endosomal/prevacuolar compartments. This chain is PRA1 family protein A1 (PRA1A1), found in Arabidopsis thaliana (Mouse-ear cress).